Here is a 579-residue protein sequence, read N- to C-terminus: Thiol:disulfide interchange protein DsbD (579 aa).

An N-terminal signal peptide occupies residues 1–16 (MKKLFLFFTLIFTAFA). 2 disulfide bridges follow: Cys124–Cys129 and Cys193–Cys315. The next 8 helical transmembrane spans lie at 178–198 (IFGFFLLGLGLAFTPCVLPML), 230–250 (LTYTLLGLAVAAIGLPFQIAL), 254–274 (YVMIGLSILFVALALSMFGLF), 296–316 (GAFGGAFAMGMIAGLVASPCT), 337–357 (AATLYLLALGMGVPLMLITLF), 376–396 (FGFVMLALPVFLLSRILPEVW), 397–417 (EPRLWAGLATVFFIWFALQMS), and 420–440 (GFGYAIKIISFALAMVTVQPL). The Thioredoxin domain maps to 449–579 (TTTQSAVENM…AFSNWLKALH (131 aa)). Residues Cys495 and Cys498 are joined by a disulfide bond.

It belongs to the thioredoxin family. DsbD subfamily.

It is found in the cell inner membrane. The enzyme catalyses [protein]-dithiol + NAD(+) = [protein]-disulfide + NADH + H(+). It carries out the reaction [protein]-dithiol + NADP(+) = [protein]-disulfide + NADPH + H(+). Its function is as follows. Required to facilitate the formation of correct disulfide bonds in some periplasmic proteins and for the assembly of the periplasmic c-type cytochromes. Acts by transferring electrons from cytoplasmic thioredoxin to the periplasm. This transfer involves a cascade of disulfide bond formation and reduction steps. This Haemophilus influenzae (strain 86-028NP) protein is Thiol:disulfide interchange protein DsbD.